The primary structure comprises 273 residues: NAD-dependent protein deacylase (273 aa).

One can recognise a Deacetylase sirtuin-type domain in the interval 1–269 (MNLDNAIHEA…PRIVEQVKKI (269 aa)). Residues 25–44 (GAGV…GGVW) and 107–110 (QNID) contribute to the NAD(+) site. Residue His-125 is the Proton acceptor of the active site. Residues Cys-133, Cys-136, Cys-173, and Cys-176 each contribute to the Zn(2+) site. NAD(+) contacts are provided by residues 211-213 (GTS), 237-239 (NPN), and Thr-255.

The protein belongs to the sirtuin family. Class III subfamily. Requires Zn(2+) as cofactor.

It is found in the cytoplasm. It carries out the reaction N(6)-acetyl-L-lysyl-[protein] + NAD(+) + H2O = 2''-O-acetyl-ADP-D-ribose + nicotinamide + L-lysyl-[protein]. NAD-dependent protein deacetylase which modulates the activities of several proteins which are inactive in their acetylated form. This Desulfosudis oleivorans (strain DSM 6200 / JCM 39069 / Hxd3) (Desulfococcus oleovorans) protein is NAD-dependent protein deacylase (cobB).